We begin with the raw amino-acid sequence, 561 residues long: Lysine--tRNA ligase (561 aa).

Positions 409 and 416 each coordinate Mg(2+).

The protein belongs to the class-II aminoacyl-tRNA synthetase family. Homodimer. Mg(2+) is required as a cofactor.

The protein resides in the cytoplasm. The catalysed reaction is tRNA(Lys) + L-lysine + ATP = L-lysyl-tRNA(Lys) + AMP + diphosphate. This chain is Lysine--tRNA ligase, found in Nostoc sp. (strain PCC 7120 / SAG 25.82 / UTEX 2576).